The primary structure comprises 121 residues: Small ribosomal subunit protein uS13 (121 aa).

The segment at 93–121 (RHLPVRGQNTKNNARTRKGPAVSIAGKKK) is disordered.

The protein belongs to the universal ribosomal protein uS13 family. As to quaternary structure, part of the 30S ribosomal subunit. Forms a loose heterodimer with protein S19. Forms two bridges to the 50S subunit in the 70S ribosome.

Located at the top of the head of the 30S subunit, it contacts several helices of the 16S rRNA. In the 70S ribosome it contacts the 23S rRNA (bridge B1a) and protein L5 of the 50S subunit (bridge B1b), connecting the 2 subunits; these bridges are implicated in subunit movement. Contacts the tRNAs in the A and P-sites. The polypeptide is Small ribosomal subunit protein uS13 (Ligilactobacillus salivarius (strain UCC118) (Lactobacillus salivarius)).